A 351-amino-acid chain; its full sequence is Dihydroorotate dehydrogenase (quinone) (351 aa).

Residues 67 to 71 (AGFDK) and Thr-91 each bind FMN. Position 71 (Lys-71) interacts with substrate. 116-120 (NAMGF) contacts substrate. Residues Asn-145 and Asn-178 each coordinate FMN. Residue Asn-178 participates in substrate binding. Ser-181 functions as the Nucleophile in the catalytic mechanism. A substrate-binding site is contributed by Asn-183. FMN-binding residues include Lys-214 and Thr-242. 243–244 (NT) contributes to the substrate binding site. Residues Gly-262, Gly-291, and 312 to 313 (YS) each bind FMN.

Belongs to the dihydroorotate dehydrogenase family. Type 2 subfamily. In terms of assembly, monomer. It depends on FMN as a cofactor.

It is found in the cell membrane. The enzyme catalyses (S)-dihydroorotate + a quinone = orotate + a quinol. It participates in pyrimidine metabolism; UMP biosynthesis via de novo pathway; orotate from (S)-dihydroorotate (quinone route): step 1/1. Functionally, catalyzes the conversion of dihydroorotate to orotate with quinone as electron acceptor. The chain is Dihydroorotate dehydrogenase (quinone) from Helicobacter pylori (strain P12).